A 132-amino-acid polypeptide reads, in one-letter code: Nucleoid-associated protein EspR (132 aa).

The H-T-H motif DNA-binding region spans 38-50 (ITMSAPYLSQLRS).

Homodimer. Binds DNA as a dimer of dimers.

Its subcellular location is the cytoplasm. It localises to the nucleoid. Virulence regulator that has both architectural and regulatory roles. Impacts cell wall functions and pathogenesis through regulation of multiple genes. This is Nucleoid-associated protein EspR from Mycobacterium tuberculosis (strain CDC 1551 / Oshkosh).